Here is a 206-residue protein sequence, read N- to C-terminus: Protein Nef (206 aa).

Gly-2 is lipidated: N-myristoyl glycine; by host. Phosphoserine; by host is present on Ser-6. Residues 62–65 (EEEE) are acidic; interacts with host PACS1 and PACS2; stabilizes the interaction of NEF/MHC-I with host AP1M1; necessary for MHC-I internalization. The SH3-binding; interaction with Src family tyrosine kinases stretch occupies residues 69–78 (PVTPQVPLRP). The PxxP; stabilizes the interaction of NEF/MHC-I with host AP1M1; necessary for MHC-I internalization motif lies at 72–75 (PQVP). The segment at 108 to 124 (DILDLWIYHTQGYFPDW) is mediates dimerization, Nef-PTE1 interaction. Residues 148-180 (VEPEKLEEANKGENTSLLHPVSLHGMDDPEREV) are binding to ATP6V1H. The Dileucine internalization motif; necessary for CD4 internalization motif lies at 164 to 165 (LL). A Diacidic; necessary for CD4 internalization motif is present at residues 174-175 (DD).

It belongs to the lentivirus primate group Nef protein family. In terms of assembly, monomer; cytosolic form. Homodimer; membrane bound form. Interacts with Nef associated p21-activated kinase (PAK2); this interaction activates PAK2. Associates with the Nef-MHC-I-AP1 complex; this complex is required for MHC-I internalization. Interacts (via C-terminus) with host PI3-kinase. Interacts with host PACS1; this interaction seems to be weak. Interacts with host PACS2. Interacts with host LCK and MAPK3; these interactions inhibit the kinase activity of the latter. Interacts with host ATP6V1H; this interaction may play a role in CD4 endocytosis. Associates with the CD4-Nef-AP2 complex; this complex is required for CD4 internalization. Interacts with host AP2 subunit alpha and AP2 subunit sigma2. Interacts with TCR-zeta chain; this interaction up-regulates the Fas ligand (FasL) surface expression. Interacts with host HCK, LYN, and SRC; these interactions activate the Src family kinases. Interacts with MAP3K5; this interaction inhibits the Fas and TNFR-mediated death signals. Interacts with beta-COP and PTE1. Interacts with human RACK1; this increases Nef phosphorylation by PKC. Interacts with TP53; this interaction decreases the half-life of TP53, protecting the infected cell against p53-mediated apoptosis. Post-translationally, the virion-associated Nef proteins are cleaved by the viral protease to release the soluble C-terminal core protein. Nef is probably cleaved concomitantly with viral structural proteins on maturation of virus particles. Myristoylated. In terms of processing, phosphorylated on serine residues, probably by host PKCdelta and theta.

The protein resides in the host cell membrane. It is found in the virion. Its subcellular location is the secreted. The protein localises to the host Golgi apparatus membrane. Its function is as follows. Factor of infectivity and pathogenicity, required for optimal virus replication. Alters numerous pathways of T-lymphocyte function and down-regulates immunity surface molecules in order to evade host defense and increase viral infectivity. Alters the functionality of other immunity cells, like dendritic cells, monocytes/macrophages and NK cells. In terms of biological role, in infected CD4(+) T-lymphocytes, down-regulates the surface MHC-I, mature MHC-II, CD4, CD28, CCR5 and CXCR4 molecules. Mediates internalization and degradation of host CD4 through the interaction of with the cytoplasmic tail of CD4, the recruitment of AP-2 (clathrin adapter protein complex 2), internalization through clathrin coated pits, and subsequent transport to endosomes and lysosomes for degradation. Diverts host MHC-I molecules to the trans-Golgi network-associated endosomal compartments by an endocytic pathway to finally target them for degradation. MHC-I down-regulation may involve AP-1 (clathrin adapter protein complex 1) or possibly Src family kinase-ZAP70/Syk-PI3K cascade recruited by PACS2. In consequence infected cells are masked for immune recognition by cytotoxic T-lymphocytes. Decreasing the number of immune receptors also prevents reinfection by more HIV particles (superinfection). Down-regulates host SERINC3 and SERINC5 thereby excluding these proteins from the viral particles. Virion infectivity is drastically higher when SERINC3 or SERINC5 are excluded from the viral envelope, because these host antiviral proteins impair the membrane fusion event necessary for subsequent virion penetration. Bypasses host T-cell signaling by inducing a transcriptional program nearly identical to that of anti-CD3 cell activation. Interaction with TCR-zeta chain up-regulates the Fas ligand (FasL). Increasing surface FasL molecules and decreasing surface MHC-I molecules on infected CD4(+) cells send attacking cytotoxic CD8+ T-lymphocytes into apoptosis. Functionally, plays a role in optimizing the host cell environment for viral replication without causing cell death by apoptosis. Protects the infected cells from apoptosis in order to keep them alive until the next virus generation is ready to strike. Inhibits the Fas and TNFR-mediated death signals by blocking MAP3K5/ASK1. Decreases the half-life of TP53, protecting the infected cell against p53-mediated apoptosis. Inhibits the apoptotic signals regulated by the Bcl-2 family proteins through the formation of a Nef/PI3-kinase/PAK2 complex that leads to activation of PAK2 and induces phosphorylation of host BAD. Its function is as follows. Extracellular Nef protein targets CD4(+) T-lymphocytes for apoptosis by interacting with CXCR4 surface receptors. This Human immunodeficiency virus type 1 group M subtype B (isolate LW123) (HIV-1) protein is Protein Nef.